A 162-amino-acid chain; its full sequence is Endoribonuclease YbeY (162 aa).

Zn(2+)-binding residues include H126, H130, and H136.

Belongs to the endoribonuclease YbeY family. Zn(2+) serves as cofactor.

The protein resides in the cytoplasm. In terms of biological role, single strand-specific metallo-endoribonuclease involved in late-stage 70S ribosome quality control and in maturation of the 3' terminus of the 16S rRNA. This is Endoribonuclease YbeY from Fusobacterium nucleatum subsp. nucleatum (strain ATCC 25586 / DSM 15643 / BCRC 10681 / CIP 101130 / JCM 8532 / KCTC 2640 / LMG 13131 / VPI 4355).